The following is a 108-amino-acid chain: Phosphoribosyl-ATP pyrophosphatase (108 aa).

This sequence belongs to the PRA-PH family.

Its subcellular location is the cytoplasm. The enzyme catalyses 1-(5-phospho-beta-D-ribosyl)-ATP + H2O = 1-(5-phospho-beta-D-ribosyl)-5'-AMP + diphosphate + H(+). It participates in amino-acid biosynthesis; L-histidine biosynthesis; L-histidine from 5-phospho-alpha-D-ribose 1-diphosphate: step 2/9. The sequence is that of Phosphoribosyl-ATP pyrophosphatase from Aromatoleum aromaticum (strain DSM 19018 / LMG 30748 / EbN1) (Azoarcus sp. (strain EbN1)).